The chain runs to 189 residues: ADP-ribosylation factor H (189 aa).

Residues 34-40 (DGAGKST), 75-79 (DVGGQ), and 134-137 (NKQD) contribute to the GTP site.

This sequence belongs to the small GTPase superfamily. Arf family.

It is found in the golgi apparatus. Functionally, GTP-binding protein that may be involved in protein trafficking. May modulate vesicle budding and uncoating within the Golgi apparatus. The protein is ADP-ribosylation factor H (arrH) of Dictyostelium discoideum (Social amoeba).